The sequence spans 366 residues: DNA-directed RNA polymerase subunit alpha (366 aa).

Positions Met-1–Glu-260 are alpha N-terminal domain (alpha-NTD). Residues Glu-274–Asp-366 are alpha C-terminal domain (alpha-CTD).

It belongs to the RNA polymerase alpha chain family. Homodimer. The RNAP catalytic core consists of 2 alpha, 1 beta, 1 beta' and 1 omega subunit. When a sigma factor is associated with the core the holoenzyme is formed, which can initiate transcription.

The enzyme catalyses RNA(n) + a ribonucleoside 5'-triphosphate = RNA(n+1) + diphosphate. DNA-dependent RNA polymerase catalyzes the transcription of DNA into RNA using the four ribonucleoside triphosphates as substrates. In Anaplasma marginale (strain St. Maries), this protein is DNA-directed RNA polymerase subunit alpha.